Here is a 320-residue protein sequence, read N- to C-terminus: Olfactory receptor 7C1 (320 aa).

Topologically, residues 1–25 (METGNQTHAQEFLLLGFSATSEIQF) are extracellular. N-linked (GlcNAc...) asparagine glycosylation occurs at N5. Residues 26 to 46 (ILFGLFLSMYLVTFTGNLLII) form a helical membrane-spanning segment. At 47 to 54 (LAICSDSH) the chain is on the cytoplasmic side. A helical transmembrane segment spans residues 55-75 (LHTPMYFFLSNLSFADLCFTS). The Extracellular portion of the chain corresponds to 76–99 (TTVPKMLLNILTQNKFITYAGCLS). C97 and C189 form a disulfide bridge. A helical transmembrane segment spans residues 100 to 120 (QIFFFTSFGCLDNLLLTVMAY). Residues 121-139 (DRFVAVCHPLHYTVIMNPQ) are Cytoplasmic-facing. The helical transmembrane segment at 140–160 (LCGLLVLGSWCISVMGSLLET) threads the bilayer. The Extracellular segment spans residues 161-197 (LTVLRLSFCTEMEIPHFFCDLLEVLKLACSDTFINNV). The chain crosses the membrane as a helical span at residues 198–217 (VIYFATGVLGVISFTGIFFS). The Cytoplasmic segment spans residues 218–237 (YYKIVFSILRISSAGRKHKA). A helical membrane pass occupies residues 238 to 258 (FSTCGSHLSVVTLFYGTGFGV). Residues 259–271 (YLSSAATPSSRTS) are Extracellular-facing. A helical membrane pass occupies residues 272–292 (LVASVMYTMVTPMLNPFIYSL). The Cytoplasmic segment spans residues 293–313 (RNTDMKRALGRLLSRATFFNG).

The protein belongs to the G-protein coupled receptor 1 family.

The protein localises to the cell membrane. In terms of biological role, odorant receptor. The chain is Olfactory receptor 7C1 (OR7C1) from Homo sapiens (Human).